The chain runs to 1353 residues: Protein prickle (1353 aa).

3 disordered regions span residues 130-206 (VDDG…TKRN), 266-292 (QEEEPPEPPKPALPPKQKQPRPVPPLP), and 500-540 (AKYS…SAHA). Low complexity predominate over residues 147–165 (TPTATATAGRPLFPLSSSP). Over residues 166–178 (RRSKKLLRSLRAH) the composition is skewed to basic residues. The span at 179–189 (VKGESRPEKPA) shows a compositional bias: basic and acidic residues. Over residues 514-532 (LSPALSTPSPPSLLHHPAA) the composition is skewed to low complexity. Positions 548 to 656 (MDMQRQSHSD…NVRQLMSARP (109 aa)) constitute a PET domain. LIM zinc-binding domains are found at residues 655-719 (RPCD…ETLK), 720-780 (PRCS…MFAE), and 781-843 (YCDY…GEPP). Disordered regions lie at residues 840-892 (GEPP…HQAS), 933-962 (HCRSGDHAGGGDFTDFSGGRASSTSHNMSP), and 1062-1303 (ADIM…SSSS). Residues 861-892 (TQRVRPQTRITSSHASSSPPMSPQQQQQHQAS) show a composition bias toward low complexity. 2 stretches are compositionally biased toward polar residues: residues 952-962 (RASSTSHNMSP) and 1111-1120 (SLNTPLSAHS). A compositionally biased stretch (low complexity) spans 1130–1142 (SILSGASSSSPMS). Residues 1177-1205 (GDKDRDRDRERDRDRDRDKGGDKDRESGR) show a composition bias toward basic and acidic residues. Basic residues-rich tracts occupy residues 1207 to 1220 (GPGHSSRRRRRRKS) and 1228 to 1240 (NHHRSGSGHRSHS). A compositionally biased stretch (basic and acidic residues) spans 1269 to 1284 (ETAHKSPRQQRERERE).

It belongs to the prickle / espinas / testin family. As to quaternary structure, interacts with dsh; PET and LIM domains interact with dsh DEP domain, in wing cells. Interacts with Vang in photoreceptor cells.

The protein localises to the cell membrane. Functionally, acts in a planar cell polarity (PCP) complex; polarization along the apical/basal axis of epithelial cells. PCP signaling in the wing disk requires the receptor fz and the cytoplasmic proteins dsh and pk. These act in a feedback loop leading to activation of the jnk cascade and subsequent polarized arrangement of hairs and bristles. Dgo and pk compete with one another for dsh binding, thereby modulating fz dsh activity and ensuring tight control over fz PCP signaling. Vang, stan and pk function together to regulate the establishment of tissue polarity in the adult eye. This is Protein prickle from Drosophila pseudoobscura pseudoobscura (Fruit fly).